A 312-amino-acid polypeptide reads, in one-letter code: 4-diphosphocytidyl-2-C-methyl-D-erythritol kinase (312 aa).

Lysine 18 is an active-site residue. Residue 104–114 (PIAGGMGGGSA) participates in ATP binding. Aspartate 146 is an active-site residue.

Belongs to the GHMP kinase family. IspE subfamily.

It carries out the reaction 4-CDP-2-C-methyl-D-erythritol + ATP = 4-CDP-2-C-methyl-D-erythritol 2-phosphate + ADP + H(+). Its pathway is isoprenoid biosynthesis; isopentenyl diphosphate biosynthesis via DXP pathway; isopentenyl diphosphate from 1-deoxy-D-xylulose 5-phosphate: step 3/6. Functionally, catalyzes the phosphorylation of the position 2 hydroxy group of 4-diphosphocytidyl-2C-methyl-D-erythritol. The protein is 4-diphosphocytidyl-2-C-methyl-D-erythritol kinase of Clavibacter michiganensis subsp. michiganensis (strain NCPPB 382).